Reading from the N-terminus, the 472-residue chain is Divalent metal cation transporter MntH (472 aa).

11 helical membrane passes run 59 to 79 (LLAFLGPGYMVSVGYMDPGNW), 92 to 112 (MLLSVILLSNVMAIVLQALAA), 144 to 164 (LAIIACDLAEVIGTAIALNLL), 167 to 187 (VPIILGAVITAVDVVLVLLLM), 196 to 216 (AFVIALLLVIFGCFVVQIVLA), 233 to 253 (VVADPQALYLAIGIVGATVMP), 288 to 308 (LALMLALFINASILILAAAVF), 325 to 345 (LLAPVLGVGVAATLFATALLA), 377 to 397 (VLTRGLAIVPVIVVVALYGEQ), 402 to 422 (LLLLSQVILSMQLPFAVIPLL), and 439 to 459 (WLMVVAWLIAGVIVVLNVKLL).

The protein belongs to the NRAMP family.

The protein resides in the cell inner membrane. H(+)-stimulated, divalent metal cation uptake system. The polypeptide is Divalent metal cation transporter MntH (Xylella fastidiosa (strain Temecula1 / ATCC 700964)).